A 620-amino-acid polypeptide reads, in one-letter code: Chaperone protein HtpG (620 aa).

The interval 1 to 339 (MAKHQFQTEI…SEDLPLNVSR (339 aa)) is a; substrate-binding. The interval 340-546 (ELLQENRILA…ASDPMAGMAA (207 aa)) is b. A c region spans residues 547–620 (MFAQMGQEMP…RVASLATKAL (74 aa)).

This sequence belongs to the heat shock protein 90 family. Homodimer.

It localises to the cytoplasm. Functionally, molecular chaperone. Has ATPase activity. This chain is Chaperone protein HtpG, found in Sulfurovum sp. (strain NBC37-1).